A 982-amino-acid chain; its full sequence is Coatomer subunit beta (982 aa).

HEAT repeat units follow at residues 16 to 53 (SGAPVNSKELKSALEKGDMKARASALEALIRMHLNGEP), 130 to 167 (ELVEPLVSSVVQNLTHRVTYVRRNAVLAVHRIFKRFPE), 241 to 278 (YDKGRYVTVLFSILQSNNPAVRYQCASTLLSISTSPTA), and 317 to 352 (LQDSLLDILSVLANGTMEIRKRIVTLGVELVSNQNS).

As to quaternary structure, oligomeric complex that consists of at least the alpha, beta, beta', gamma, delta, epsilon and zeta subunits.

Its subcellular location is the cytoplasm. The protein resides in the golgi apparatus membrane. It is found in the cytoplasmic vesicle. The protein localises to the COPI-coated vesicle membrane. Its function is as follows. The coatomer is a cytosolic protein complex that binds to dilysine motifs and reversibly associates with Golgi non-clathrin-coated vesicles, which further mediate biosynthetic protein transport from the ER, via the Golgi up to the trans Golgi network. Coatomer complex is required for budding from Golgi membranes, and is essential for the retrograde Golgi-to-ER transport of dilysine-tagged proteins. The polypeptide is Coatomer subunit beta (Trypanosoma brucei brucei).